The chain runs to 691 residues: Lectin-domain containing receptor kinase VI.4 (691 aa).

The signal sequence occupies residues 1 to 19 (MGRAKSMVSLLLVLFLVRA). At 20–306 (HVATTETTTE…AKKRGYNGKV (287 aa)) the chain is on the extracellular side. The segment at 26–273 (TTTEFIFHGF…AHYVMGWSFA (248 aa)) is legume-lectin like. A helical membrane pass occupies residues 307–327 (IALIVALSTVISIMLVLLFLF). The Cytoplasmic portion of the chain corresponds to 328–691 (MMYKKRMQQE…ISSTSLISGR (364 aa)). The 279-residue stretch at 363–641 (FKENRVVGTG…LNRDEDVPEI (279 aa)) folds into the Protein kinase domain. ATP is bound by residues 369–377 (VGTGGFGIV) and Lys392. Catalysis depends on Asp491, which acts as the Proton acceptor.

This sequence in the C-terminal section; belongs to the protein kinase superfamily. Ser/Thr protein kinase family. It in the N-terminal section; belongs to the leguminous lectin family.

It localises to the cell membrane. The enzyme catalyses L-seryl-[protein] + ATP = O-phospho-L-seryl-[protein] + ADP + H(+). It catalyses the reaction L-threonyl-[protein] + ATP = O-phospho-L-threonyl-[protein] + ADP + H(+). Involved in negative regulation of abscisic acid response in seed germination. The sequence is that of Lectin-domain containing receptor kinase VI.4 (LECRK64) from Arabidopsis thaliana (Mouse-ear cress).